Here is a 62-residue protein sequence, read N- to C-terminus: MRITYKKSSIGYSQAQKDTVRSLGLRKLNQVVELPDTPVVRGMIFKIKHLVTVEEVTATEAK.

The protein belongs to the universal ribosomal protein uL30 family. As to quaternary structure, part of the 50S ribosomal subunit.

The polypeptide is Large ribosomal subunit protein uL30 (Herpetosiphon aurantiacus (strain ATCC 23779 / DSM 785 / 114-95)).